The sequence spans 521 residues: 2,3-bisphosphoglycerate-independent phosphoglycerate mutase (521 aa).

Residues aspartate 18 and serine 68 each coordinate Mn(2+). The Phosphoserine intermediate role is filled by serine 68. Substrate is bound by residues histidine 129, 158-159 (RD), arginine 190, arginine 196, 266-269 (RSDR), and lysine 343. Mn(2+) is bound by residues aspartate 410, histidine 414, aspartate 451, histidine 452, and histidine 470.

The protein belongs to the BPG-independent phosphoglycerate mutase family. Monomer. It depends on Mn(2+) as a cofactor.

The enzyme catalyses (2R)-2-phosphoglycerate = (2R)-3-phosphoglycerate. The protein operates within carbohydrate degradation; glycolysis; pyruvate from D-glyceraldehyde 3-phosphate: step 3/5. In terms of biological role, catalyzes the interconversion of 2-phosphoglycerate and 3-phosphoglycerate. This chain is 2,3-bisphosphoglycerate-independent phosphoglycerate mutase, found in Hydrogenovibrio crunogenus (strain DSM 25203 / XCL-2) (Thiomicrospira crunogena).